A 397-amino-acid chain; its full sequence is Elongation factor Tu 1 (397 aa).

The region spanning 10 to 206 is the tr-type G domain; sequence KPHVNIGTIG…AVDENIPQPE (197 aa). The tract at residues 19 to 26 is G1; it reads GHIDHGKT. 19–26 provides a ligand contact to GTP; that stretch reads GHIDHGKT. Residue Thr-26 participates in Mg(2+) binding. Positions 62-66 are G2; that stretch reads GITIS. A G3 region spans residues 83–86; sequence DCPG. GTP contacts are provided by residues 83–87 and 138–141; these read DCPGH and NKAD. Positions 138-141 are G4; it reads NKAD. A G5 region spans residues 176 to 178; sequence SAL.

This sequence belongs to the TRAFAC class translation factor GTPase superfamily. Classic translation factor GTPase family. EF-Tu/EF-1A subfamily. In terms of assembly, monomer.

Its subcellular location is the cytoplasm. It catalyses the reaction GTP + H2O = GDP + phosphate + H(+). In terms of biological role, GTP hydrolase that promotes the GTP-dependent binding of aminoacyl-tRNA to the A-site of ribosomes during protein biosynthesis. In Streptomyces avermitilis (strain ATCC 31267 / DSM 46492 / JCM 5070 / NBRC 14893 / NCIMB 12804 / NRRL 8165 / MA-4680), this protein is Elongation factor Tu 1.